A 740-amino-acid polypeptide reads, in one-letter code: Transcription activator of gluconeogenesis NCU03938 (740 aa).

Positions 1–66 (MPDDVGPAEA…KYDPKDPLRP (66 aa)) are disordered. Acidic residues predominate over residues 19–37 (SDNEYDETEVTTKDDDDEK). Positions 52–65 (GDQKKKYDPKDPLR) are enriched in basic and acidic residues. A DNA-binding region (zn(2)-C6 fungal-type) is located at residues 75–103 (CYACQRAHLTCGDERPCQRCIKRGLAEAC). Disordered regions lie at residues 333–405 (PAGP…RQRD), 532–579 (NSDT…KEQP), and 639–674 (APTA…PTGV). Positions 337-351 (TSLQSPSTENNSPQP) are enriched in polar residues. The region spanning 475 to 546 (ALFEHEEFMH…SISSKGGRGG (72 aa)) is the PAS domain. Over residues 639 to 658 (APTASGGSGSSNGTVVNGGP) the composition is skewed to low complexity.

It belongs to the ERT1/acuK family.

Its subcellular location is the nucleus. Transcription factor which regulates nonfermentable carbon utilization. Activator of gluconeogenetic genes. This is Transcription activator of gluconeogenesis NCU03938 from Neurospora crassa (strain ATCC 24698 / 74-OR23-1A / CBS 708.71 / DSM 1257 / FGSC 987).